The primary structure comprises 144 residues: Large ribosomal subunit protein uL16 (144 aa).

It belongs to the universal ribosomal protein uL16 family. As to quaternary structure, part of the 50S ribosomal subunit.

Functionally, binds 23S rRNA and is also seen to make contacts with the A and possibly P site tRNAs. The protein is Large ribosomal subunit protein uL16 of Latilactobacillus sakei subsp. sakei (strain 23K) (Lactobacillus sakei subsp. sakei).